The sequence spans 373 residues: Mannitol-1-phosphate 5-dehydrogenase (373 aa).

An NAD(+)-binding site is contributed by 3-14 (ALHFGAGNIGRG).

It belongs to the mannitol dehydrogenase family.

The enzyme catalyses D-mannitol 1-phosphate + NAD(+) = beta-D-fructose 6-phosphate + NADH + H(+). This Bacillus pumilus (strain SAFR-032) protein is Mannitol-1-phosphate 5-dehydrogenase.